A 696-amino-acid chain; its full sequence is Polyribonucleotide nucleotidyltransferase (696 aa).

Positions 483 and 489 each coordinate Mg(2+). One can recognise a KH domain in the interval 550-609 (PRITTIWVKVDKIRDVIGSGGKNIRSVTEATGVSIDIDDTGKINIASTNKEACDLAIKMI). The region spanning 619–687 (GKLYMGTVKK…KQGKIKLSRK (69 aa)) is the S1 motif domain.

Belongs to the polyribonucleotide nucleotidyltransferase family. Mg(2+) serves as cofactor.

Its subcellular location is the cytoplasm. The enzyme catalyses RNA(n+1) + phosphate = RNA(n) + a ribonucleoside 5'-diphosphate. Functionally, involved in mRNA degradation. Catalyzes the phosphorolysis of single-stranded polyribonucleotides processively in the 3'- to 5'-direction. This is Polyribonucleotide nucleotidyltransferase from Citrifermentans bemidjiense (strain ATCC BAA-1014 / DSM 16622 / JCM 12645 / Bem) (Geobacter bemidjiensis).